Reading from the N-terminus, the 217-residue chain is MGAKQSSPAANGRTRAYSGSDLPSATASVNGRTAAVLRYNNSQGASGATSAASASSSAAVASQFISSRTRSVGPSARPQSGINIPNSGAYSSADSGNSTPEEPGGERERSTGAPRLVIGSLPAHLSPHLFGGFKCPVCSKFISSDEMDLHLVMCLTKPRVTYNEDVLSKDAGECAICLEELLQGDTIARLPCLCIYHKGCIDEWFEVNRSCPEHPAD.

2 disordered regions span residues Met-1–Ala-27 and Gln-63–Thr-111. Residue Gly-2 is the site of N-myristoyl glycine attachment. Residues Arg-68–Pro-100 are compositionally biased toward polar residues. Residues Cys-174–Pro-215 form an RING-type; atypical zinc finger.

It is found in the endosome membrane. It localises to the lysosome membrane. Its subcellular location is the presynaptic cell membrane. It carries out the reaction S-ubiquitinyl-[E2 ubiquitin-conjugating enzyme]-L-cysteine + [acceptor protein]-L-lysine = [E2 ubiquitin-conjugating enzyme]-L-cysteine + N(6)-ubiquitinyl-[acceptor protein]-L-lysine.. It participates in protein modification; protein ubiquitination. In terms of biological role, may play a role in the establishment and maintenance of neuronal transmission and plasticity via its ubiquitin ligase activity. E3 ubiquitin ligases accept ubiquitin from an E2 ubiquitin-conjugating enzyme in the form of a thioester and then directly transfer the ubiquitin to targeted substrates. This is E3 ubiquitin-protein ligase znrf2 (znrf2) from Danio rerio (Zebrafish).